A 307-amino-acid polypeptide reads, in one-letter code: Elongation factor Ts (307 aa).

An involved in Mg(2+) ion dislocation from EF-Tu region spans residues 80–83 (TDFV).

This sequence belongs to the EF-Ts family.

Its subcellular location is the cytoplasm. Functionally, associates with the EF-Tu.GDP complex and induces the exchange of GDP to GTP. It remains bound to the aminoacyl-tRNA.EF-Tu.GTP complex up to the GTP hydrolysis stage on the ribosome. The protein is Elongation factor Ts of Azorhizobium caulinodans (strain ATCC 43989 / DSM 5975 / JCM 20966 / LMG 6465 / NBRC 14845 / NCIMB 13405 / ORS 571).